Consider the following 279-residue polypeptide: Alcohol dehydrogenase-related 31 kDa protein (279 aa).

NAD(+) is bound at residue 11–34 (YVADCGGIALETSKVLMTKNIAKL). S139 serves as a coordination point for substrate. The Proton acceptor role is filled by Y152.

This sequence belongs to the short-chain dehydrogenases/reductases (SDR) family.

This chain is Alcohol dehydrogenase-related 31 kDa protein (Adhr), found in Drosophila guanche (Fruit fly).